The chain runs to 317 residues: Methionyl-tRNA formyltransferase (317 aa).

111–114 (SLLP) contacts (6S)-5,6,7,8-tetrahydrofolate.

It belongs to the Fmt family.

It carries out the reaction L-methionyl-tRNA(fMet) + (6R)-10-formyltetrahydrofolate = N-formyl-L-methionyl-tRNA(fMet) + (6S)-5,6,7,8-tetrahydrofolate + H(+). In terms of biological role, attaches a formyl group to the free amino group of methionyl-tRNA(fMet). The formyl group appears to play a dual role in the initiator identity of N-formylmethionyl-tRNA by promoting its recognition by IF2 and preventing the misappropriation of this tRNA by the elongation apparatus. The protein is Methionyl-tRNA formyltransferase of Chlorobium phaeobacteroides (strain BS1).